Reading from the N-terminus, the 415-residue chain is UDP-N-acetylglucosamine 1-carboxyvinyltransferase 1 (415 aa).

23–24 (KN) is a binding site for phosphoenolpyruvate. R92 provides a ligand contact to UDP-N-acetyl-alpha-D-glucosamine. C116 acts as the Proton donor in catalysis. Residue C116 is modified to 2-(S-cysteinyl)pyruvic acid O-phosphothioketal. Residues 121–125 (RPIDL), D304, and V326 contribute to the UDP-N-acetyl-alpha-D-glucosamine site.

It belongs to the EPSP synthase family. MurA subfamily.

It localises to the cytoplasm. It catalyses the reaction phosphoenolpyruvate + UDP-N-acetyl-alpha-D-glucosamine = UDP-N-acetyl-3-O-(1-carboxyvinyl)-alpha-D-glucosamine + phosphate. Its pathway is cell wall biogenesis; peptidoglycan biosynthesis. In terms of biological role, cell wall formation. Adds enolpyruvyl to UDP-N-acetylglucosamine. This Caldanaerobacter subterraneus subsp. tengcongensis (strain DSM 15242 / JCM 11007 / NBRC 100824 / MB4) (Thermoanaerobacter tengcongensis) protein is UDP-N-acetylglucosamine 1-carboxyvinyltransferase 1.